The sequence spans 685 residues: Sodium-dependent phosphate transporter 1-B (685 aa).

Transmembrane regions (helical) follow at residues 21–41 (IMAP…VLAF), 66–86 (ACIL…AKVS), 106–126 (LMAG…AASF), 162–182 (IVLS…LLFF), 207–227 (ACTI…LLGF), and 234–254 (GIIL…WFFV). The tract at residues 489–511 (EGCIEDVVTDRKSSSSSLEERHD) is disordered. The segment covering 496 to 511 (VTDRKSSSSSLEERHD) has biased composition (basic and acidic residues). Helical transmembrane passes span 517–537 (VSLL…FAHG), 565–585 (ATPI…LWVW), 606–626 (FSIE…GLPI), and 656–676 (IFLA…GIMA).

The protein belongs to the inorganic phosphate transporter (PiT) (TC 2.A.20) family.

The protein resides in the membrane. In terms of biological role, sodium-phosphate symporter which plays a fundamental housekeeping role in phosphate transport. This is Sodium-dependent phosphate transporter 1-B (slc20a1-b) from Xenopus laevis (African clawed frog).